Consider the following 227-residue polypeptide: Ribose-5-phosphate isomerase A (227 aa).

Substrate is bound by residues 26-29 (TGST), 82-85 (DGAD), and 95-98 (KGGG). The Proton acceptor role is filled by Glu-104. Lys-122 contacts substrate.

It belongs to the ribose 5-phosphate isomerase family. Homodimer.

The catalysed reaction is aldehydo-D-ribose 5-phosphate = D-ribulose 5-phosphate. It functions in the pathway carbohydrate degradation; pentose phosphate pathway; D-ribose 5-phosphate from D-ribulose 5-phosphate (non-oxidative stage): step 1/1. Its function is as follows. Catalyzes the reversible conversion of ribose-5-phosphate to ribulose 5-phosphate. The chain is Ribose-5-phosphate isomerase A from Streptococcus pyogenes serotype M2 (strain MGAS10270).